A 254-amino-acid chain; its full sequence is 23S rRNA (guanosine-2'-O-)-methyltransferase RlmB (254 aa).

Positions 198, 218, and 227 each coordinate S-adenosyl-L-methionine.

Belongs to the class IV-like SAM-binding methyltransferase superfamily. RNA methyltransferase TrmH family. RlmB subfamily. As to quaternary structure, homodimer.

The protein localises to the cytoplasm. The catalysed reaction is guanosine(2251) in 23S rRNA + S-adenosyl-L-methionine = 2'-O-methylguanosine(2251) in 23S rRNA + S-adenosyl-L-homocysteine + H(+). Functionally, specifically methylates the ribose of guanosine 2251 in 23S rRNA. The polypeptide is 23S rRNA (guanosine-2'-O-)-methyltransferase RlmB (Blochmanniella floridana).